The sequence spans 69 residues: Metallothionein-like protein 3 (69 aa).

It belongs to the metallothionein superfamily. Type 15 family. In terms of tissue distribution, expressed in leaf mesophyll cells, root tips, and at low levels in anthers.

In terms of biological role, metallothioneins have a high content of cysteine residues that bind various heavy metals. Functions as a metal chelator of copper (Cu) and zinc (Zn). Plays a role in Cu homeostasis, specifically in the remobilization of Cu from senescing leaves. The mobilization of Cu from internal sources is important for seed development. The chain is Metallothionein-like protein 3 from Arabidopsis thaliana (Mouse-ear cress).